We begin with the raw amino-acid sequence, 238 residues long: tRNA (guanine-N(7)-)-methyltransferase (238 aa).

S-adenosyl-L-methionine-binding residues include glutamate 70, aspartate 95, aspartate 122, and aspartate 145. Aspartate 145 is a catalytic residue. Substrate is bound by residues lysine 149, aspartate 181, and 216 to 219 (TKFE).

This sequence belongs to the class I-like SAM-binding methyltransferase superfamily. TrmB family.

It catalyses the reaction guanosine(46) in tRNA + S-adenosyl-L-methionine = N(7)-methylguanosine(46) in tRNA + S-adenosyl-L-homocysteine. It participates in tRNA modification; N(7)-methylguanine-tRNA biosynthesis. Catalyzes the formation of N(7)-methylguanine at position 46 (m7G46) in tRNA. This chain is tRNA (guanine-N(7)-)-methyltransferase, found in Neisseria gonorrhoeae (strain ATCC 700825 / FA 1090).